We begin with the raw amino-acid sequence, 116 residues long: Large ribosomal subunit protein bL20 (116 aa).

It belongs to the bacterial ribosomal protein bL20 family.

Functionally, binds directly to 23S ribosomal RNA and is necessary for the in vitro assembly process of the 50S ribosomal subunit. It is not involved in the protein synthesizing functions of that subunit. This is Large ribosomal subunit protein bL20 from Helicobacter pylori (strain G27).